The following is a 122-amino-acid chain: Large ribosomal subunit protein eL22B (122 aa).

This sequence belongs to the eukaryotic ribosomal protein eL22 family. As to quaternary structure, component of the large ribosomal subunit (LSU). Mature yeast ribosomes consist of a small (40S) and a large (60S) subunit. The 40S small subunit contains 1 molecule of ribosomal RNA (18S rRNA) and 33 different proteins (encoded by 57 genes). The large 60S subunit contains 3 rRNA molecules (25S, 5.8S and 5S rRNA) and 46 different proteins (encoded by 81 genes).

Its subcellular location is the cytoplasm. In terms of biological role, component of the ribosome, a large ribonucleoprotein complex responsible for the synthesis of proteins in the cell. The small ribosomal subunit (SSU) binds messenger RNAs (mRNAs) and translates the encoded message by selecting cognate aminoacyl-transfer RNA (tRNA) molecules. The large subunit (LSU) contains the ribosomal catalytic site termed the peptidyl transferase center (PTC), which catalyzes the formation of peptide bonds, thereby polymerizing the amino acids delivered by tRNAs into a polypeptide chain. The nascent polypeptides leave the ribosome through a tunnel in the LSU and interact with protein factors that function in enzymatic processing, targeting, and the membrane insertion of nascent chains at the exit of the ribosomal tunnel. This is Large ribosomal subunit protein eL22B from Saccharomyces cerevisiae (strain ATCC 204508 / S288c) (Baker's yeast).